The following is an 88-amino-acid chain: Small ribosomal subunit protein bS20 (88 aa).

Residues 1-11 (MANIKSSEKDI) show a composition bias toward basic and acidic residues. Disordered stretches follow at residues 1–31 (MANI…LRTQ) and 69–88 (SKNA…SSAA).

This sequence belongs to the bacterial ribosomal protein bS20 family.

In terms of biological role, binds directly to 16S ribosomal RNA. This is Small ribosomal subunit protein bS20 from Leptospira interrogans serogroup Icterohaemorrhagiae serovar copenhageni (strain Fiocruz L1-130).